The chain runs to 206 residues: MEPVASNIQVLLQAAEFLERREREAEHGYASLCPHHSPGTVCRRRKPPLQAPGALNSGRSVHNELEKRRRAQLKRCLEQLRQQMPLGVDCTRYTTLSLLRRARVHIQKLEEQEQQARRLKEKLRSKQQSLQQQLEQLQGLPGARERERLRADSLDSSGLSSERSDSDQEDLEVDVESLVFGTETELLQSFSAGREHSYSHSTCAWL.

The tract at residues 8-25 is interaction with SIN3A and SIN3B; sequence IQVLLQAAEFLERREREA. Disordered regions lie at residues 29 to 66 and 122 to 171; these read YASL…NELE and KLRS…QEDL. The bHLH domain maps to 57 to 109; sequence SGRSVHNELEKRRRAQLKRCLEQLRQQMPLGVDCTRYTTLSLLRRARVHIQKL. Positions 126–138 are enriched in low complexity; it reads KQQSLQQQLEQLQ. Positions 143–153 are enriched in basic and acidic residues; sequence ARERERLRADS.

In terms of assembly, efficient DNA binding requires dimerization with another bHLH protein. Binds DNA as a heterodimer with MAX. Interacts with SIN3A AND SIN3B. Interacts with RNF17. In terms of tissue distribution, expressed only in the proliferating areas of the testis and thymus.

It localises to the nucleus. Transcriptional repressor. Binds with MAX to form a sequence-specific DNA-binding protein complex which recognizes the core sequence 5'-CAC[GA]TG-3'. Antagonizes MYC transcriptional activity by competing for MAX and suppresses MYC dependent cell transformation. In Mus musculus (Mouse), this protein is Max dimerization protein 3 (Mxd3).